We begin with the raw amino-acid sequence, 44 residues long: Viresin (44 aa).

Belongs to the insect A10/OS-D protein family.

The protein resides in the secreted. In terms of biological role, has antibacterial activity against the Gram-negative bacteria E.coli and E.cloacae, but not against the Gram-negative bacteria P.aeruginosa, P.vulgaris, K.pneumoniae and S.enteritidis or the Gram-positive bacteria S.aureus, S.epidermidis and S.salivarius. This chain is Viresin, found in Heliothis virescens (Tobacco budworm moth).